The sequence spans 202 residues: UPF0102 protein Dde_1093 (202 aa).

Belongs to the UPF0102 family.

This chain is UPF0102 protein Dde_1093, found in Oleidesulfovibrio alaskensis (strain ATCC BAA-1058 / DSM 17464 / G20) (Desulfovibrio alaskensis).